The primary structure comprises 403 residues: Cell cycle checkpoint control protein RAD9B (403 aa).

A disordered region spans residues 285-347; the sequence is PLSQARRSHP…ASAGQDDIFE (63 aa). 2 positions are modified to phosphoserine: serine 354 and serine 363.

It belongs to the rad9 family. In terms of assembly, interacts with HUS1, HUS1B, RAD1, RAD9A and RAD17.

This chain is Cell cycle checkpoint control protein RAD9B (Rad9b), found in Mus musculus (Mouse).